The following is a 106-amino-acid chain: Glutaredoxin-1 (106 aa).

Residue Ala2 is modified to N-acetylalanine. Residues 3 to 106 enclose the Glutaredoxin domain; sequence QAFVNSKIQP…TRLQQIGALK (104 aa). Residue Lys9 is modified to N6-succinyllysine. Cystine bridges form between Cys23/Cys26 and Cys79/Cys83.

Belongs to the glutaredoxin family.

The protein localises to the cytoplasm. Has a glutathione-disulfide oxidoreductase activity in the presence of NADPH and glutathione reductase. Reduces low molecular weight disulfides and proteins. The polypeptide is Glutaredoxin-1 (GLRX) (Sus scrofa (Pig)).